The sequence spans 437 residues: 5-hydroxytryptamine receptor 3B (437 aa).

The signal sequence occupies residues 1 to 21; sequence MILLWSCLLVAVVGILGTATP. The Extracellular segment spans residues 22–235; the sequence is QPGNSSLHRL…RFNVVIRRCP (214 aa). N-linked (GlcNAc...) asparagine glycosylation is found at N25, N92, and N134. C151 and C165 form a disulfide bridge. Residues 236 to 255 traverse the membrane as a helical segment; the sequence is LAYVVSLLIPSIFLMLVDLG. Topologically, residues 256–266 are cytoplasmic; it reads SFYLPPNCRAR. A helical membrane pass occupies residues 267–284; sequence IVFKTNVLVGYTVFRVNM. The Extracellular segment spans residues 285 to 295; the sequence is SDEVPRSAGCT. The chain crosses the membrane as a helical span at residues 296-324; it reads SLIGVFFTVCMALLVLSLSKSILLIKFLY. Topologically, residues 325 to 410 are cytoplasmic; it reads EERHSEQERP…WLAILCHFDQ (86 aa). The segment at 377 to 409 is HA-stretch; determines single-channel conductance in 5-HT3 receptors; that stretch reads FWFQLQSINNSLRTRDQVYQKEVEWLAILCHFD. The chain crosses the membrane as a helical span at residues 411–434; it reads LLFRIYLAVLGLYTVTLCSLWALW. Residues 435-437 are Extracellular-facing; that stretch reads SRM.

The protein belongs to the ligand-gated ion channel (TC 1.A.9) family. 5-hydroxytryptamine receptor (TC 1.A.9.2) subfamily. HTR3B sub-subfamily. In terms of assembly, forms homopentameric as well as heteropentameric serotonin-activated cation-selective channel complexes with HTR3A. The homomeric complex is not functional. Heteropentameric complexes display properties which resemble that of neuronal serotonin-activated channels in vivo. In terms of processing, N-glycosylation is required for membrane localization. In terms of tissue distribution, expressed in peripheral neurons, but not in neurons of the central nervous system.

The protein localises to the postsynaptic cell membrane. It localises to the cell membrane. It carries out the reaction Na(+)(in) = Na(+)(out). It catalyses the reaction K(+)(in) = K(+)(out). The enzyme catalyses Ca(2+)(in) = Ca(2+)(out). In terms of biological role, forms serotonin (5-hydroxytryptamine/5-HT3)-activated cation-selective channel complexes, which when activated cause fast, depolarizing responses in neurons. In Rattus norvegicus (Rat), this protein is 5-hydroxytryptamine receptor 3B.